A 372-amino-acid polypeptide reads, in one-letter code: Y-box-binding protein 3 (372 aa).

Residues 1-82 (MSEAGEATTT…LATAAGSEDA (82 aa)) form a disordered region. The residue at position 2 (Ser-2) is an N-acetylserine. Ser-2 is modified (phosphoserine). Low complexity predominate over residues 7-28 (ATTTTTTTLPQAPTEAAAAAPQ). Ser-34 is subject to Phosphoserine. The segment covering 35–79 (PVGSGAPQAAAPAPAAHVAGNPGGDAAPAATGTAAAASLATAAGS) has biased composition (low complexity). Residues 93–157 (GTVKWFNVRN…GEKGAEAANV (65 aa)) enclose the CSD domain. Ser-134, Ser-201, Ser-203, and Ser-204 each carry phosphoserine. Positions 181 to 372 (YYGRRRGPPR…APPTQQSSAE (192 aa)) are disordered. Basic residues predominate over residues 222–238 (QLRRPQYRPQYRQRRFP). The residue at position 251 (Arg-251) is an Omega-N-methylarginine. A compositionally biased stretch (polar residues) spans 314-324 (QQATSGPNQPS). Residue Ser-324 is modified to Phosphoserine. Position 326 is an omega-N-methylarginine (Arg-326). The segment covering 327–340 (RGYRRPYNYRRRPR) has biased composition (basic residues). Residues Ser-346, Ser-369, and Ser-370 each carry the phosphoserine modification.

As to quaternary structure, found in a mRNP complex with YBX2. Interacts with RRP1B. In terms of tissue distribution, highly expressed in skeletal muscle and heart.

The protein localises to the cytoplasm. It localises to the nucleus. Its function is as follows. Binds to the GM-CSF promoter. Seems to act as a repressor. Also binds to full-length mRNA and to short RNA sequences containing the consensus site 5'-UCCAUCA-3'. May have a role in translation repression. The chain is Y-box-binding protein 3 (YBX3) from Homo sapiens (Human).